A 273-amino-acid polypeptide reads, in one-letter code: Diaminopimelate epimerase (273 aa).

Substrate contacts are provided by N11 and N60. Catalysis depends on C69, which acts as the Proton donor. Substrate is bound by residues 70–71 (GN), N181, and 199–200 (ER). The active-site Proton acceptor is the C209. 210–211 (GT) contacts substrate.

This sequence belongs to the diaminopimelate epimerase family. In terms of assembly, homodimer.

The protein resides in the cytoplasm. It catalyses the reaction (2S,6S)-2,6-diaminopimelate = meso-2,6-diaminopimelate. The protein operates within amino-acid biosynthesis; L-lysine biosynthesis via DAP pathway; DL-2,6-diaminopimelate from LL-2,6-diaminopimelate: step 1/1. Functionally, catalyzes the stereoinversion of LL-2,6-diaminopimelate (L,L-DAP) to meso-diaminopimelate (meso-DAP), a precursor of L-lysine and an essential component of the bacterial peptidoglycan. In Helicobacter pylori (strain HPAG1), this protein is Diaminopimelate epimerase.